We begin with the raw amino-acid sequence, 362 residues long: UDP-N-acetylglucosamine--N-acetylmuramyl-(pentapeptide) pyrophosphoryl-undecaprenol N-acetylglucosamine transferase (362 aa).

Residues 14-16 (TGG), Arg170, Ser199, and Gln289 each bind UDP-N-acetyl-alpha-D-glucosamine.

Belongs to the glycosyltransferase 28 family. MurG subfamily.

It is found in the cell inner membrane. It carries out the reaction di-trans,octa-cis-undecaprenyl diphospho-N-acetyl-alpha-D-muramoyl-L-alanyl-D-glutamyl-meso-2,6-diaminopimeloyl-D-alanyl-D-alanine + UDP-N-acetyl-alpha-D-glucosamine = di-trans,octa-cis-undecaprenyl diphospho-[N-acetyl-alpha-D-glucosaminyl-(1-&gt;4)]-N-acetyl-alpha-D-muramoyl-L-alanyl-D-glutamyl-meso-2,6-diaminopimeloyl-D-alanyl-D-alanine + UDP + H(+). Its pathway is cell wall biogenesis; peptidoglycan biosynthesis. In terms of biological role, cell wall formation. Catalyzes the transfer of a GlcNAc subunit on undecaprenyl-pyrophosphoryl-MurNAc-pentapeptide (lipid intermediate I) to form undecaprenyl-pyrophosphoryl-MurNAc-(pentapeptide)GlcNAc (lipid intermediate II). The protein is UDP-N-acetylglucosamine--N-acetylmuramyl-(pentapeptide) pyrophosphoryl-undecaprenol N-acetylglucosamine transferase of Borrelia turicatae (strain 91E135).